The primary structure comprises 617 residues: Cytoplasmic polyadenylation element-binding protein 1 (617 aa).

Positions M1–G38 are disordered. 2 RRM domains span residues R273 to L377 and R394 to T465. Disordered regions lie at residues D534–T568 and N592–Y617. Over residues P542 to T563 the composition is skewed to basic residues.

In terms of assembly, interacts with fbf-1.

In terms of biological role, cytoplasmic polyadenylation element binding protein that binds to and regulates the translation of specific mRNAs. Essential for progression through meiosis. Involved in spermatogenesis. The chain is Cytoplasmic polyadenylation element-binding protein 1 (cpb-1) from Caenorhabditis japonica.